A 185-amino-acid chain; its full sequence is Ribosome-recycling factor (185 aa).

The protein belongs to the RRF family.

The protein localises to the cytoplasm. In terms of biological role, responsible for the release of ribosomes from messenger RNA at the termination of protein biosynthesis. May increase the efficiency of translation by recycling ribosomes from one round of translation to another. This chain is Ribosome-recycling factor, found in Syntrophobacter fumaroxidans (strain DSM 10017 / MPOB).